A 56-amino-acid polypeptide reads, in one-letter code: Repressor-like protein SSo7c4 (56 aa).

In terms of domain architecture, SpoVT-AbrB spans 4–51; sequence EEIVKVSRNYQVTIPAKVRQKFQIKEGDLVKVTFDESGGVVKIQLLDS.

This is Repressor-like protein SSo7c4 from Saccharolobus solfataricus (strain ATCC 35092 / DSM 1617 / JCM 11322 / P2) (Sulfolobus solfataricus).